Reading from the N-terminus, the 145-residue chain is Putative transcriptional regulatory protein PYRAB13000 (145 aa).

This sequence belongs to the Tfx family.

Its function is as follows. Putative transcriptional regulator. The polypeptide is Putative transcriptional regulatory protein PYRAB13000 (Pyrococcus abyssi (strain GE5 / Orsay)).